The following is a 164-amino-acid chain: Phosphopantetheine adenylyltransferase (164 aa).

Substrate is bound at residue Ser-9. ATP-binding positions include 9–10 (SF) and His-17. Positions 41, 73, and 87 each coordinate substrate. ATP contacts are provided by residues 88–90 (GLR), Glu-98, and 123–129 (YSYISSS).

Belongs to the bacterial CoaD family. As to quaternary structure, homohexamer. It depends on Mg(2+) as a cofactor.

It is found in the cytoplasm. The catalysed reaction is (R)-4'-phosphopantetheine + ATP + H(+) = 3'-dephospho-CoA + diphosphate. The protein operates within cofactor biosynthesis; coenzyme A biosynthesis; CoA from (R)-pantothenate: step 4/5. Its function is as follows. Reversibly transfers an adenylyl group from ATP to 4'-phosphopantetheine, yielding dephospho-CoA (dPCoA) and pyrophosphate. The protein is Phosphopantetheine adenylyltransferase of Clostridium perfringens (strain SM101 / Type A).